The sequence spans 526 residues: Zinc finger protein Helios (526 aa).

The interval 28-94 is disordered; it reads DLTSSTPNGQ…IESSEVADNR (67 aa). A compositionally biased stretch (polar residues) spans 29 to 50; the sequence is LTSSTPNGQHASPSHMTSTNSV. Ser56 bears the Phosphoserine mark. The span at 61–77 shows a compositional bias: basic and acidic residues; the sequence is DRQPLSREDEIRGHDEG. A phosphoserine mark is found at Ser78 and Ser79. A Glycyl lysine isopeptide (Lys-Gly) (interchain with G-Cter in SUMO2) cross-link involves residue Lys95. C2H2-type zinc fingers lie at residues 112–134, 140–162, 168–190, and 196–219; these read LKCD…KRSH, FHCN…IKLH, FKCP…LRTH, and HKCN…ERCH. Lys288 carries the N6-acetyllysine modification. Positions 368-379 are enriched in basic and acidic residues; the sequence is ISRETSDSHENN. The disordered stretch occupies residues 368-435; it reads ISRETSDSHE…LNPKRKQSPA (68 aa). Residues Lys442 and Lys448 each participate in a glycyl lysine isopeptide (Lys-Gly) (interchain with G-Cter in SUMO2) cross-link. C2H2-type zinc fingers lie at residues 471 to 493 and 499 to 523; these read FKCE…MGCH and LECN…RGEH.

Belongs to the Ikaros C2H2-type zinc-finger protein family. Can form homodimers. Interacts with IKZF4 and IKZF5. Expressed in outer hair cells (OHC) of the organ of Corti. Abundant in thymus, low expression in bone marrow and brain and no detectable expression in spleen, liver, kidney or muscle. Expressed in T-cells.

It localises to the nucleus. Transcriptional regulator required for outer hair cells (OHC) maturation and, consequently, for hearing. The polypeptide is Zinc finger protein Helios (Ikzf2) (Mus musculus (Mouse)).